Reading from the N-terminus, the 385-residue chain is Probable alginate O-acetylase AlgJ (385 aa).

Residues 1 to 21 form the signal peptide; it reads MTRTLRITYSLSFLGLLVGMG. Aspartate 190 is an active-site residue. The Proton acceptor role is filled by histidine 192. Catalysis depends on serine 288, which acts as the Nucleophile.

It belongs to the AlgJ family.

It localises to the cell inner membrane. Its subcellular location is the periplasm. Its pathway is glycan biosynthesis; alginate biosynthesis. Functionally, together with AlgI and AlgF, forms an inner membrane complex which probably interacts with the alginate polymerization-transport complex and adds acetyl groups at the O-2 and O-3 positions of mannuronate residues. Acetylation of alginate is important for the architecture of biofilms and increases the ability of alginate to act as a defense barrier. The sequence is that of Probable alginate O-acetylase AlgJ (algJ) from Pseudomonas putida (strain ATCC 47054 / DSM 6125 / CFBP 8728 / NCIMB 11950 / KT2440).